The following is a 760-amino-acid chain: Cyclin-D-binding Myb-like transcription factor 1 (760 aa).

Residues 1 to 237 (MSTVEEDSDT…TPEEIEKLKE (237 aa)) are interaction with CCND2. Residues 24–63 (DTDGNLILHCPQNDPDEIDSEDSTEPPHKRLCLSSEDDQS) are disordered. Over residues 37 to 47 (DPDEIDSEDST) the composition is skewed to acidic residues. The segment at 87 to 170 (VTMTATTEVA…IDILMNNIER (84 aa)) is required for transcriptional activation. The tract at residues 87–458 (VTMTATTEVA…DNTAISPSPM (372 aa)) is required for DNA-binding. The tract at residues 176–690 (GIKDATEIIF…PTIVHQVHQT (515 aa)) is interaction with CCND1, CCND2 and CCND3. Positions 225 to 263 (GKYTPEEIEKLKELRIKHGNDWATIGAALGRSASSVKDR) constitute a Myb-like 1 domain. The 66-residue stretch at 268–333 (KDTCNTGKWT…KWLNYLNWKQ (66 aa)) folds into the HTH myb-type domain. The H-T-H motif DNA-binding region spans 306 to 329 (WAAVAERVGTRSEKQCRSKWLNYL). One can recognise a Myb-like 2 domain in the interval 339-388 (WTKEDEINLILRIAELDVADENDINWDLLAEGWSSVRSPQWLRSKWWTIK). The interval 459 to 760 (AALQIPVQIT…KDVEDLVNCH (302 aa)) is required for transcriptional activation. Disordered regions lie at residues 593 to 614 (DSDL…DTFP) and 738 to 760 (IGSS…VNCH).

It belongs to the DMTF1 family. Interacts with the D-type cyclins CCND1, CCND2 and CCND3. Interaction with D-type cyclins may modulate transcriptional activation by this protein. In terms of processing, phosphorylated by the cyclin-D2/CDK4, cyclin-D3/CDK4 and cyclin-D2/CDK6 complexes and to a lesser extent by the cyclin-D1/CDK4 complex.

It localises to the nucleus. Functionally, transcriptional activator which activates the CDKN2A/ARF locus in response to Ras-Raf signaling, thereby promoting p53/TP53-dependent growth arrest. Binds to the consensus sequence 5'-CCCG[GT]ATGT-3'. The chain is Cyclin-D-binding Myb-like transcription factor 1 (Dmtf1) from Rattus norvegicus (Rat).